The following is an 853-amino-acid chain: DNA mismatch repair protein MutS (853 aa).

614 to 621 contacts ATP; the sequence is GPNMGGKS.

The protein belongs to the DNA mismatch repair MutS family.

This protein is involved in the repair of mismatches in DNA. It is possible that it carries out the mismatch recognition step. This protein has a weak ATPase activity. This is DNA mismatch repair protein MutS from Escherichia fergusonii (strain ATCC 35469 / DSM 13698 / CCUG 18766 / IAM 14443 / JCM 21226 / LMG 7866 / NBRC 102419 / NCTC 12128 / CDC 0568-73).